Consider the following 389-residue polypeptide: Trans-2-enoyl-CoA reductase [NADH] (389 aa).

Residues 47–52 (GASTGY), 73–74 (FE), 110–111 (DA), and 138–139 (LA) each bind NAD(+). Residue Y224 coordinates substrate. Catalysis depends on Y234, which acts as the Proton donor. Residues K243 and 272 to 274 (LVT) each bind NAD(+).

Belongs to the TER reductase family. Monomer.

The catalysed reaction is a 2,3-saturated acyl-CoA + NAD(+) = a (2E)-enoyl-CoA + NADH + H(+). The protein operates within lipid metabolism; fatty acid biosynthesis. In terms of biological role, involved in the fatty acid synthesis (FAS II). Catalyzes the reduction of a carbon-carbon double bond in an enoyl moiety that is covalently linked to a coenzyme A (CoA). This is Trans-2-enoyl-CoA reductase [NADH] from Clostridium perfringens (strain SM101 / Type A).